Reading from the N-terminus, the 58-residue chain is Large ribosomal subunit protein uL30 (58 aa).

The protein belongs to the universal ribosomal protein uL30 family. Part of the 50S ribosomal subunit.

This is Large ribosomal subunit protein uL30 from Acinetobacter baumannii (strain AB307-0294).